The primary structure comprises 231 residues: uncharacterized protein (231 aa).

The signal sequence occupies residues 1–17; that stretch reads MFGKILTTSLLIAMTFA. Residues 197–231 form a disordered region; sequence KARKQQKNEGDDEETEDEQKIGSAIDGWVERQAKL.

This is an uncharacterized protein from Caenorhabditis elegans.